Here is a 249-residue protein sequence, read N- to C-terminus: MLQLWKLVLLCGVLTGTSESLLDNLGNDLSNVVDKLEPVLHEGLETVDNTLKGILEKLKVDLGVLQKSSAWQLAKQKAQEAEKLLNNVISKLLPTNTDIFGLKISNSLILDVKAEPIDDGKGLNLSFPVTANVTVAGPIIGQIINLKASLDLLTAVTIETDPQTHQPVAVLGECASDPTSISLSLLDKHSQIINKFVNSVINTLKSTVSSLLQKEICPLIRIFIHSLDVNVIQQVVDNPQHKTQLQTLI.

The first 18 residues, 1 to 18 (MLQLWKLVLLCGVLTGTS), serve as a signal peptide directing secretion. N124 and N132 each carry an N-linked (GlcNAc...) asparagine glycan. C174 and C217 are disulfide-bonded.

It belongs to the BPI/LBP/Plunc superfamily. Plunc family. Detected in submandibular gland. Secreted into saliva.

It is found in the secreted. Its function is as follows. Has strong antibacterial activity against P.aeruginosa. The chain is BPI fold-containing family A member 2 (BPIFA2) from Homo sapiens (Human).